A 188-amino-acid chain; its full sequence is Diphosphoinositol polyphosphate phosphohydrolase DDP1 (188 aa).

A compositionally biased stretch (basic and acidic residues) spans 1–21; it reads MGKTADNHGPVRSETAREGRE. A disordered region spans residues 1-23; it reads MGKTADNHGPVRSETAREGRENQ. Positions 30 to 179 constitute a Nudix hydrolase domain; that stretch reads GARLVAGCIC…KRPELLEALN (150 aa). 4 residues coordinate 1D-myo-inositol hexakisphosphate: arginine 32, serine 52, serine 53, and lysine 63. Residues arginine 32, serine 52, serine 53, and lysine 63 each contribute to the 5-diphospho-1D-myo-inositol 1,2,3,4,6-pentakisphosphate site. Residues arginine 32, serine 52, serine 53, and lysine 63 each coordinate P(1),P(5)-bis(5'-adenosyl) pentaphosphate. Positions 63, 80, and 84 each coordinate Mg(2+). A Nudix box motif is present at residues 65–86; sequence GVEKDEPNYETTAQRETWEEAG. Aspartate 100 serves as a coordination point for P(1),P(5)-bis(5'-adenosyl) pentaphosphate. 4 residues coordinate 1D-myo-inositol hexakisphosphate: arginine 102, arginine 129, arginine 152, and arginine 171. Residue arginine 102 participates in 5-diphospho-1D-myo-inositol 1,2,3,4,6-pentakisphosphate binding. Residues arginine 152 and arginine 171 each contribute to the 5-diphospho-1D-myo-inositol 1,2,3,4,6-pentakisphosphate site. Residues arginine 152, arginine 171, and glutamate 173 each contribute to the P(1),P(5)-bis(5'-adenosyl) pentaphosphate site.

Belongs to the Nudix hydrolase family. DIPP subfamily. Mg(2+) is required as a cofactor. It depends on Mn(2+) as a cofactor. Requires Zn(2+) as cofactor.

It is found in the cytoplasm. The protein localises to the nucleus. The catalysed reaction is diphospho-myo-inositol polyphosphate + H2O = myo-inositol polyphosphate + phosphate.. The enzyme catalyses P(1),P(6)-bis(5'-adenosyl) hexaphosphate + H2O = adenosine 5'-pentaphosphate + AMP + 2 H(+). It carries out the reaction P(1),P(5)-bis(5'-adenosyl) pentaphosphate + H2O = adenosine 5'-tetraphosphate + AMP + 2 H(+). It catalyses the reaction [phosphate](n+1) + n H2O = (n+1) phosphate + n H(+). May eliminate potentially toxic dinucleoside polyphosphates during sporulation. Most active against diadenosine 5',5'''-P1,P6-hexaphosphate (Ap6A). Can also hydrolyze diadenosine 5',5'''-P1,P5-pentaphosphate (Ap5A), adenosine 5'-pentaphosphate (p5A), and adenosine 5'-tetraphosphate (p4A) are also substrates, but not diadenosine 5',5'''-P1,P4-tetraphosphate (Ap4A) or other dinucleotides, mononucleotides, nucleotide sugars, or nucleotide alcohols. Also cleaves a beta-phosphate from the diphosphate groups in PP-InsP5 (diphosphoinositol pentakisphosphate) and [PP]2-InsP4 (bisdiphosphoinositol tetrakisphosphate). Also has endopolyphosphatase activity. This chain is Diphosphoinositol polyphosphate phosphohydrolase DDP1 (DDP1), found in Saccharomyces cerevisiae (strain ATCC 204508 / S288c) (Baker's yeast).